A 70-amino-acid chain; its full sequence is Large ribosomal subunit protein bL31 (70 aa).

The Zn(2+) site is built by C16, C18, C37, and C40.

The protein belongs to the bacterial ribosomal protein bL31 family. Type A subfamily. As to quaternary structure, part of the 50S ribosomal subunit. The cofactor is Zn(2+).

In terms of biological role, binds the 23S rRNA. This chain is Large ribosomal subunit protein bL31, found in Alteromonas mediterranea (strain DSM 17117 / CIP 110805 / LMG 28347 / Deep ecotype).